Consider the following 200-residue polypeptide: ATP-dependent Clp protease proteolytic subunit (200 aa).

Catalysis depends on Ser102, which acts as the Nucleophile. The active site involves His127.

Belongs to the peptidase S14 family. Fourteen ClpP subunits assemble into 2 heptameric rings which stack back to back to give a disk-like structure with a central cavity, resembling the structure of eukaryotic proteasomes.

The protein localises to the cytoplasm. It catalyses the reaction Hydrolysis of proteins to small peptides in the presence of ATP and magnesium. alpha-casein is the usual test substrate. In the absence of ATP, only oligopeptides shorter than five residues are hydrolyzed (such as succinyl-Leu-Tyr-|-NHMec, and Leu-Tyr-Leu-|-Tyr-Trp, in which cleavage of the -Tyr-|-Leu- and -Tyr-|-Trp bonds also occurs).. In terms of biological role, cleaves peptides in various proteins in a process that requires ATP hydrolysis. Has a chymotrypsin-like activity. Plays a major role in the degradation of misfolded proteins. This chain is ATP-dependent Clp protease proteolytic subunit, found in Dehalococcoides mccartyi (strain ATCC BAA-2266 / KCTC 15142 / 195) (Dehalococcoides ethenogenes (strain 195)).